Reading from the N-terminus, the 473-residue chain is 3-isopropylmalate dehydratase large subunit (473 aa).

Residues cysteine 351, cysteine 414, and cysteine 417 each coordinate [4Fe-4S] cluster.

The protein belongs to the aconitase/IPM isomerase family. LeuC type 1 subfamily. Heterodimer of LeuC and LeuD. [4Fe-4S] cluster serves as cofactor.

It catalyses the reaction (2R,3S)-3-isopropylmalate = (2S)-2-isopropylmalate. Its pathway is amino-acid biosynthesis; L-leucine biosynthesis; L-leucine from 3-methyl-2-oxobutanoate: step 2/4. Its function is as follows. Catalyzes the isomerization between 2-isopropylmalate and 3-isopropylmalate, via the formation of 2-isopropylmaleate. The sequence is that of 3-isopropylmalate dehydratase large subunit from Acidovorax ebreus (strain TPSY) (Diaphorobacter sp. (strain TPSY)).